The sequence spans 78 residues: MGRSIRLFATFFLIAMLFLSTEMGPMTSAEARTCESQSHRFHGTCVRESNCASVCQTEGFIGGNCRAFRRRCFCTRNC.

The signal sequence occupies residues 1 to 31; that stretch reads MGRSIRLFATFFLIAMLFLSTEMGPMTSAEA. Cystine bridges form between Cys-34–Cys-78, Cys-45–Cys-65, Cys-51–Cys-72, and Cys-55–Cys-74.

It belongs to the DEFL family. In terms of tissue distribution, predominantly expressed in the pistil during all stages of flower development.

It is found in the secreted. May be involved in the defense of the pistil against pathogen infection. This chain is Defensin-like protein, found in Petunia integrifolia (Violet-flowered petunia).